The chain runs to 81 residues: Photosystem I iron-sulfur center (81 aa).

2 consecutive 4Fe-4S ferredoxin-type domains span residues 2-31 and 39-68; these read SHSVKIYDTCIGCTQCVRACPTDVLEMIPW and IASAPRTEDCVGCKRCESACPTDFLSVRVY. [4Fe-4S] cluster is bound by residues C11, C14, C17, C21, C48, C51, C54, and C58.

As to quaternary structure, the eukaryotic PSI reaction center is composed of at least 11 subunits. [4Fe-4S] cluster serves as cofactor.

It is found in the plastid. The protein localises to the chloroplast thylakoid membrane. The catalysed reaction is reduced [plastocyanin] + hnu + oxidized [2Fe-2S]-[ferredoxin] = oxidized [plastocyanin] + reduced [2Fe-2S]-[ferredoxin]. Its function is as follows. Apoprotein for the two 4Fe-4S centers FA and FB of photosystem I (PSI); essential for photochemical activity. FB is the terminal electron acceptor of PSI, donating electrons to ferredoxin. The C-terminus interacts with PsaA/B/D and helps assemble the protein into the PSI complex. Required for binding of PsaD and PsaE to PSI. PSI is a plastocyanin-ferredoxin oxidoreductase, converting photonic excitation into a charge separation, which transfers an electron from the donor P700 chlorophyll pair to the spectroscopically characterized acceptors A0, A1, FX, FA and FB in turn. The polypeptide is Photosystem I iron-sulfur center (Sorghum bicolor (Sorghum)).